Reading from the N-terminus, the 236-residue chain is MKTIVICSGGLDSVSLAHKVAAEQELSGLLSFDYGQRHRKELDFAAACARRLGVPHQIIDIREIGRRLTGSALTDEVDVPDGHYAEETMKATVVPNRNAIMLAIAFGVAAARKADAVATAVHGGDHFIYPDCRPGFIDAFQAMQDHALDGYADVALYAPFVNVSKADIVADGARHDTPFAETWSCYKGGARHCGRCGTCVERREAFHLAGVPDPTEYDDPDFWVAATGSFVAEEVK.

Residue 7–17 (CSGGLDSVSLA) coordinates ATP. The Zn(2+) site is built by C185, C193, C196, and C199.

This sequence belongs to the QueC family. Zn(2+) serves as cofactor.

The catalysed reaction is 7-carboxy-7-deazaguanine + NH4(+) + ATP = 7-cyano-7-deazaguanine + ADP + phosphate + H2O + H(+). Its pathway is purine metabolism; 7-cyano-7-deazaguanine biosynthesis. Its function is as follows. Catalyzes the ATP-dependent conversion of 7-carboxy-7-deazaguanine (CDG) to 7-cyano-7-deazaguanine (preQ(0)). In Rhizobium meliloti (strain 1021) (Ensifer meliloti), this protein is 7-cyano-7-deazaguanine synthase.